A 479-amino-acid polypeptide reads, in one-letter code: MSVLLVGVSHRTAPVPVLERVAVTDTDRPKLTDKLLASSHISEAMIVSTCNRVEIYAVVDAFHGALAEVGELLADHSGLDLTDLHRHAYVRYSEAAAEHLFAVASGLDSMVIGEQQILGQIRTAYASSDAQQAAGRTLHELAQQALRVGKRVHSETGIDSAGASVVSVALDRAAGIVGDGGLTGRTAVVVGAGSMGGLSVAHLTRAGIGRIVVVNRTKERAEHLADTARANGVEAEALELSELPAAMAQADVLVTCTGAVGAVVTLADTHRALAQPGRDAERPLVICDLGLPRDVEPAVSGLPGVTVLDMESLQRDPAAGAAASDADAARTIVAAELANYLAGQRLAEVTPTVTALRQRAADVVEAELMRLDSRLPGLDDPERDEVARTVRRVVDKLLHAPTVRVKQLASAPGGDSYAAALRELFELSPGSVEAVAKPTDLGGATDLSAIDITDGFIAGQDPRLRRFVTDDNHGKESQA.

Residues 49–52 (TCNR), S109, 114–116 (EQQ), and Q120 each bind substrate. The active-site Nucleophile is C50. Position 191–196 (191–196 (GAGSMG)) interacts with NADP(+).

This sequence belongs to the glutamyl-tRNA reductase family. In terms of assembly, homodimer.

It catalyses the reaction (S)-4-amino-5-oxopentanoate + tRNA(Glu) + NADP(+) = L-glutamyl-tRNA(Glu) + NADPH + H(+). It functions in the pathway porphyrin-containing compound metabolism; protoporphyrin-IX biosynthesis; 5-aminolevulinate from L-glutamyl-tRNA(Glu): step 1/2. Its function is as follows. Catalyzes the NADPH-dependent reduction of glutamyl-tRNA(Glu) to glutamate 1-semialdehyde (GSA). The chain is Glutamyl-tRNA reductase from Rhodococcus jostii (strain RHA1).